The sequence spans 418 residues: Deubiquitinase and deneddylase Dub1 (418 aa).

Over residues 1–10 (MLSPTNSISK) the composition is skewed to polar residues. Positions 1–23 (MLSPTNSISKTAPVPPQDSSKPV) are disordered. A helical membrane pass occupies residues 40–60 (TALAVLLVVVTLGLILLFYSF). The interval 72–144 (TRPSTKEQPT…PLPPKAPKPV (73 aa)) is disordered. Positions 86–141 (VPLPSPPLAVPRPSTPPPPVISRPSTPPAPTPAISPPSTPSAPKPSTPPPLPPKAP) are enriched in pro residues. Catalysis depends on residues His288, Asp305, and Cys358.

Belongs to the peptidase C48 family.

The protein resides in the secreted. The protein localises to the host cell. It is found in the membrane. Effector proteins function to alter host cell physiology and promote bacterial survival in host tissues. This protease possesses deubiquitinating and deneddylating activities. The chain is Deubiquitinase and deneddylase Dub1 (cdu1) from Chlamydia trachomatis serovar B (strain Jali20/OT).